A 197-amino-acid chain; its full sequence is Xanthine phosphoribosyltransferase (197 aa).

Leu-20 and Thr-27 together coordinate xanthine. 128–132 serves as a coordination point for 5-phospho-alpha-D-ribose 1-diphosphate; that stretch reads ANGQA. Residue Lys-156 coordinates xanthine.

It belongs to the purine/pyrimidine phosphoribosyltransferase family. Xpt subfamily. Homodimer.

It localises to the cytoplasm. It catalyses the reaction XMP + diphosphate = xanthine + 5-phospho-alpha-D-ribose 1-diphosphate. It participates in purine metabolism; XMP biosynthesis via salvage pathway; XMP from xanthine: step 1/1. Converts the preformed base xanthine, a product of nucleic acid breakdown, to xanthosine 5'-monophosphate (XMP), so it can be reused for RNA or DNA synthesis. In Lactococcus lactis subsp. cremoris (strain MG1363), this protein is Xanthine phosphoribosyltransferase.